We begin with the raw amino-acid sequence, 320 residues long: Malate dehydrogenase (320 aa).

Residues 10-15 (GAGQIG) and D34 each bind NAD(+). Positions 83 and 89 each coordinate substrate. Residues N96 and 119-121 (ITN) contribute to the NAD(+) site. The substrate site is built by N121 and R152. The active-site Proton acceptor is the H176.

The protein belongs to the LDH/MDH superfamily. MDH type 3 family.

It carries out the reaction (S)-malate + NAD(+) = oxaloacetate + NADH + H(+). Its function is as follows. Catalyzes the reversible oxidation of malate to oxaloacetate. The chain is Malate dehydrogenase from Jannaschia sp. (strain CCS1).